The chain runs to 408 residues: Elongation factor Tu, chloroplastic (408 aa).

Residues 10-213 form the tr-type G domain; sequence KPHVNIGTIG…KVDEYIPTPE (204 aa). The segment at 19–26 is G1; the sequence is GHVDHGKT. 19–26 is a GTP binding site; that stretch reads GHVDHGKT. Thr26 contacts Mg(2+). Positions 59 to 63 are G2; the sequence is GITIN. A G3 region spans residues 80–83; sequence DCPG. Residues 80 to 84 and 135 to 138 each bind GTP; these read DCPGH and NKAD. Positions 135–138 are G4; sequence NKAD. The G5 stretch occupies residues 173-175; it reads SAL.

It belongs to the TRAFAC class translation factor GTPase superfamily. Classic translation factor GTPase family. EF-Tu/EF-1A subfamily.

The protein localises to the plastid. The protein resides in the chloroplast. The enzyme catalyses GTP + H2O = GDP + phosphate + H(+). Functionally, GTP hydrolase that promotes the GTP-dependent binding of aminoacyl-tRNA to the A-site of ribosomes during protein biosynthesis. This chain is Elongation factor Tu, chloroplastic (tufA), found in Guillardia theta (Cryptophyte).